Consider the following 355-residue polypeptide: Protein RecA (355 aa).

67–74 (GPESSGKT) lines the ATP pocket. Positions 331 to 355 (NQDDKPDFTPAAHEVDEGSEAKENF) are disordered.

This sequence belongs to the RecA family.

It localises to the cytoplasm. In terms of biological role, can catalyze the hydrolysis of ATP in the presence of single-stranded DNA, the ATP-dependent uptake of single-stranded DNA by duplex DNA, and the ATP-dependent hybridization of homologous single-stranded DNAs. It interacts with LexA causing its activation and leading to its autocatalytic cleavage. The polypeptide is Protein RecA (Erwinia tasmaniensis (strain DSM 17950 / CFBP 7177 / CIP 109463 / NCPPB 4357 / Et1/99)).